Consider the following 441-residue polypeptide: tRNA(Ile)-lysidine synthase (441 aa).

27-32 is a binding site for ATP; sequence SGGVDS.

This sequence belongs to the tRNA(Ile)-lysidine synthase family.

Its subcellular location is the cytoplasm. The enzyme catalyses cytidine(34) in tRNA(Ile2) + L-lysine + ATP = lysidine(34) in tRNA(Ile2) + AMP + diphosphate + H(+). Its function is as follows. Ligates lysine onto the cytidine present at position 34 of the AUA codon-specific tRNA(Ile) that contains the anticodon CAU, in an ATP-dependent manner. Cytidine is converted to lysidine, thus changing the amino acid specificity of the tRNA from methionine to isoleucine. The protein is tRNA(Ile)-lysidine synthase of Proteus mirabilis (strain HI4320).